Consider the following 201-residue polypeptide: Prostamide/prostaglandin F synthase (201 aa).

Tyr108 bears the Phosphotyrosine mark.

It belongs to the peroxiredoxin-like PRXL2 family. Prostamide/prostaglandin F synthase subfamily.

It is found in the cytoplasm. The protein resides in the cytosol. It carries out the reaction prostaglandin H2 + [thioredoxin]-dithiol = prostaglandin F2alpha + [thioredoxin]-disulfide. The catalysed reaction is prostamide F2alpha + [thioredoxin]-disulfide = prostamide H2 + [thioredoxin]-dithiol. In terms of biological role, catalyzes the reduction of prostaglandin-ethanolamide H(2) (prostamide H(2)) to prostamide F(2alpha) with NADPH as proton donor. Also able to reduce prostaglandin H(2) to prostaglandin F(2alpha). The protein is Prostamide/prostaglandin F synthase (PRXL2B) of Bos taurus (Bovine).